We begin with the raw amino-acid sequence, 367 residues long: Zinc metalloproteinase nas-22 (367 aa).

An N-terminal signal peptide occupies residues Met-1 to Gly-16. The 197-residue stretch at Val-41–Ser-237 folds into the Peptidase M12A domain. Asn-56 and Asn-85 each carry an N-linked (GlcNAc...) asparagine glycan. Intrachain disulfides connect Cys-88–Cys-236, Cys-111–Cys-130, Cys-238–Cys-258, and Cys-260–Cys-269. His-138 is a binding site for Zn(2+). The active site involves Glu-139. Positions 142 and 148 each coordinate Zn(2+). Asn-169, Asn-241, and Asn-254 each carry an N-linked (GlcNAc...) asparagine glycan. Residues Lys-232 to Ser-270 enclose the EGF-like domain. 2 N-linked (GlcNAc...) asparagine glycosylation sites follow: Asn-287 and Asn-322.

Zn(2+) is required as a cofactor. In terms of tissue distribution, expressed in uterine seam (utse) cell.

Its subcellular location is the secreted. Its function is as follows. Metalloprotease. This chain is Zinc metalloproteinase nas-22 (nas-22), found in Caenorhabditis elegans.